The chain runs to 621 residues: Exonuclease 3'-5' domain-containing protein 2 (621 aa).

The Mitochondrial intermembrane portion of the chain corresponds to 1–4 (MSRQ). A helical membrane pass occupies residues 5–25 (NLVALTVTTLLGVAVGGFVLW). The Cytoplasmic segment spans residues 26-621 (KGIQRRRRSK…FGEDLPIQLS (596 aa)). The segment at 34 to 68 (SKTSPVTQQPQQKVLGSRELPPPEDDQLHSSAPRS) is disordered. A compositionally biased stretch (polar residues) spans 36–47 (TSPVTQQPQQKV). A divalent metal cation-binding residues include D108, E110, and D246. In terms of domain architecture, 3'-5' exonuclease spans 155-247 (ILADGTILKV…DQVIYAARDA (93 aa)). Residues 299–343 (RLGEEVNGEATESQQKPRNKKSKMDGMVPGNHQGRDPRKHKRKPL) form a disordered region.

Belongs to the EXD2 family. Homodimer. Interacts with RBBP8, MRE11 and BRCA1. The cofactor is Mg(2+). Mn(2+) is required as a cofactor.

Its subcellular location is the mitochondrion outer membrane. The protein resides in the mitochondrion matrix. It is found in the nucleus. The protein localises to the chromosome. It carries out the reaction Exonucleolytic cleavage in the 3'- to 5'-direction to yield nucleoside 5'-phosphates.. In terms of biological role, exonuclease that has both 3'-5' exoribonuclease and exodeoxyribonuclease activities, depending on the divalent metal cation used as cofactor. In presence of Mg(2+), only shows 3'-5' exoribonuclease activity, while it shows both exoribonuclease and exodeoxyribonuclease activities in presence of Mn(2+). Acts as an exoribonuclease in mitochondrion, possibly by regulating ATP production and mitochondrial translation. Also involved in the response to DNA damage. Acts as 3'-5' exodeoxyribonuclease for double-strand breaks resection and efficient homologous recombination. Plays a key role in controlling the initial steps of chromosomal break repair, it is recruited to chromatin in a damage-dependent manner and functionally interacts with the MRN complex to accelerate resection through its 3'-5' exonuclease activity, which efficiently processes double-stranded DNA substrates containing nicks. Also involved in response to replicative stress: recruited to stalled forks and is required to stabilize and restart stalled replication forks by restraining excessive fork regression, thereby suppressing their degradation. This chain is Exonuclease 3'-5' domain-containing protein 2, found in Homo sapiens (Human).